Here is a 245-residue protein sequence, read N- to C-terminus: Bis(5'-nucleosyl)-tetraphosphatase PrpE [asymmetrical] (245 aa).

Belongs to the PrpE family. Ni(2+) is required as a cofactor.

It catalyses the reaction P(1),P(4)-bis(5'-guanosyl) tetraphosphate + H2O = GMP + GTP + 2 H(+). Its function is as follows. Asymmetrically hydrolyzes Ap4p to yield AMP and ATP. This chain is Bis(5'-nucleosyl)-tetraphosphatase PrpE [asymmetrical], found in Anoxybacillus flavithermus (strain DSM 21510 / WK1).